A 348-amino-acid chain; its full sequence is sn-glycerol-3-phosphate import ATP-binding protein UgpC 3 (348 aa).

In terms of domain architecture, ABC transporter spans 4 to 234 (INIIDVKKNY…PASLFVASFI (231 aa)). 36–43 (GPSGCGKS) is a binding site for ATP.

This sequence belongs to the ABC transporter superfamily. sn-glycerol-3-phosphate importer (TC 3.A.1.1.3) family. As to quaternary structure, the complex is composed of two ATP-binding proteins (UgpC), two transmembrane proteins (UgpA and UgpE) and a solute-binding protein (UgpB).

It is found in the cell inner membrane. The enzyme catalyses sn-glycerol 3-phosphate(out) + ATP + H2O = sn-glycerol 3-phosphate(in) + ADP + phosphate + H(+). Part of the ABC transporter complex UgpBAEC involved in sn-glycerol-3-phosphate (G3P) import. Responsible for energy coupling to the transport system. The polypeptide is sn-glycerol-3-phosphate import ATP-binding protein UgpC 3 (Rhizobium johnstonii (strain DSM 114642 / LMG 32736 / 3841) (Rhizobium leguminosarum bv. viciae)).